Reading from the N-terminus, the 620-residue chain is Ferric/cupric reductase transmembrane component 7 (620 aa).

Residues 1-45 (MIEERDLVLSNGIHCIADIHSELYARLKKESQAATPWVYQKQYGK) lie on the Extracellular side of the membrane. A helical membrane pass occupies residues 46–66 (FVTYFVAVIIFLSLIKKLAFM). Residues 67-107 (YYDSSEEFLPEKKNSPTTPSVFLARIMTKLVAFNRYICYRK) lie on the Cytoplasmic side of the membrane. The helical transmembrane segment at 108–128 (FPTLIFSYLGIPTSVGTFLVV) threads the bilayer. The Extracellular segment spans residues 129-167 (MATTLYTLLYCFVPHPFYRPCAGFGSPPLSVRAGIMAIS). Positions 161–320 (AGIMAISLVP…LAVKGYLRPG (160 aa)) constitute a Ferric oxidoreductase domain. A helical membrane pass occupies residues 168 to 188 (LVPFVFSLSGKINVIGWLVGL). The Cytoplasmic portion of the chain corresponds to 189–194 (SYEKIN). Residues 195 to 215 (IYHQWASILCLFFSWVHVIPF) form a helical membrane-spanning segment. Residues H197 and H211 each contribute to the heme site. Residues 216–237 (LRQARHEGGYERMHQRWKASDM) lie on the Extracellular side of the membrane. Residues 238–258 (WRSGVPPILFLNLLWLSSLPI) traverse the membrane as a helical segment. Residues 259-265 (ARRHFYE) lie on the Cytoplasmic side of the membrane. The chain crosses the membrane as a helical span at residues 266 to 286 (IFLQLHWILAVGFYISLFYHV). The heme site is built by H271 and H285. At 287-292 (YPELNS) the chain is on the extracellular side. A helical membrane pass occupies residues 293 to 313 (HMYLVATIVVWFAQLFYRLAV). Over 314–620 (KGYLRPGRSF…CYLHSESFGY (307 aa)) the chain is Cytoplasmic. Positions 321–419 (RSFMASTIAN…DGPYGGIERD (99 aa)) constitute an FAD-binding FR-type domain. 369–375 (HPFSIFP) is an FAD binding site. Residue 411–414 (GPYG) coordinates NADP(+). A disordered region spans residues 519 to 543 (SDQSDLAKREKDTEFGQDDTESNST). The segment covering 523–532 (DLAKREKDTE) has biased composition (basic and acidic residues). 578 to 579 (CF) is a binding site for NADP(+).

It belongs to the ferric reductase (FRE) family. Requires FAD as cofactor.

The protein resides in the cell membrane. It carries out the reaction 2 a Fe(II)-siderophore + NADP(+) + H(+) = 2 a Fe(III)-siderophore + NADPH. Cell surface metalloreductase. May be involved in copper homeostasis. This is Ferric/cupric reductase transmembrane component 7 (FRE7) from Saccharomyces cerevisiae (strain ATCC 204508 / S288c) (Baker's yeast).